The following is an 81-amino-acid chain: Short neurotoxin D (81 aa).

The first 21 residues, 1 to 21 (MKTLLLTLVVVTIVCLDLGYT), serve as a signal peptide directing secretion. Cystine bridges form between Cys-24–Cys-43, Cys-38–Cys-60, Cys-62–Cys-73, and Cys-74–Cys-79.

It belongs to the three-finger toxin family. Short-chain subfamily. Type I alpha-neurotoxin sub-subfamily. As to expression, expressed by the venom gland.

Its subcellular location is the secreted. Functionally, binds to muscle nicotinic acetylcholine receptor (nAChR) and inhibit acetylcholine from binding to the receptor, thereby impairing neuromuscular transmission. This chain is Short neurotoxin D, found in Aipysurus laevis (Olive sea snake).